The following is a 347-amino-acid chain: TEGPDFYIPMVNTTGVVRSPYEYPQYYLVNPAAYAVLGAYMFFLIIVGFPINFLTLYVTLEHKKLRTPLNYILLNLAVADLFMVIGGFTTTMYSSMHGYFVLGRLGCNIEGFFATLGGMISLWSLAVLAIERWVVVCKPISNFRFGENHAIMGVSLTWVMALACTVPPLVGWSRYIPEGMQCACGIDYYTRAEGYNNESFVIYMFTFHFLFPMFIIFFCYGRLLCAVKEAAAAQQESETTQRAEREVTRMVILMVIGYLVCWLPYASVAWFIFTHKGSEFGPLFMAVPSFFAKSSSIYNPIIYICMNKQFRQCMITTLFCGKNPFEGQEEDSSTKTEASSASSVSPA.

The Extracellular portion of the chain corresponds to 1–33 (TEGPDFYIPMVNTTGVVRSPYEYPQYYLVNPAA). N-linked (GlcNAc...) asparagine glycosylation is present at Asn-12. Residues 34 to 58 (YAVLGAYMFFLIIVGFPINFLTLYV) traverse the membrane as a helical segment. Over 59-70 (TLEHKKLRTPLN) the chain is Cytoplasmic. The helical transmembrane segment at 71-93 (YILLNLAVADLFMVIGGFTTTMY) threads the bilayer. The Extracellular segment spans residues 94–107 (SSMHGYFVLGRLGC). Residues Cys-107 and Cys-184 are joined by a disulfide bond. Residues 108-130 (NIEGFFATLGGMISLWSLAVLAI) traverse the membrane as a helical segment. The 'Ionic lock' involved in activated form stabilization signature appears at 131–133 (ERW). At 131-149 (ERWVVVCKPISNFRFGENH) the chain is on the cytoplasmic side. Residues 150-170 (AIMGVSLTWVMALACTVPPLV) form a helical membrane-spanning segment. The Extracellular segment spans residues 171 to 199 (GWSRYIPEGMQCACGIDYYTRAEGYNNES). Asn-197 carries an N-linked (GlcNAc...) asparagine glycan. The helical transmembrane segment at 200–221 (FVIYMFTFHFLFPMFIIFFCYG) threads the bilayer. Residues 222–249 (RLLCAVKEAAAAQQESETTQRAEREVTR) lie on the Cytoplasmic side of the membrane. Residues 250–271 (MVILMVIGYLVCWLPYASVAWF) traverse the membrane as a helical segment. At 272-283 (IFTHKGSEFGPL) the chain is on the extracellular side. A helical membrane pass occupies residues 284–305 (FMAVPSFFAKSSSIYNPIIYIC). N6-(retinylidene)lysine is present on Lys-293. The Cytoplasmic portion of the chain corresponds to 306–347 (MNKQFRQCMITTLFCGKNPFEGQEEDSSTKTEASSASSVSPA). Cys-320 carries the S-palmitoyl cysteine lipid modification. A disordered region spans residues 326-347 (EGQEEDSSTKTEASSASSVSPA). Low complexity predominate over residues 335 to 347 (KTEASSASSVSPA).

The protein belongs to the G-protein coupled receptor 1 family. Opsin subfamily. Post-translationally, phosphorylated on some or all of the serine and threonine residues present in the C-terminal region. Contains one covalently linked retinal chromophore.

Its subcellular location is the membrane. The protein resides in the cell projection. It localises to the cilium. The protein localises to the photoreceptor outer segment. Functionally, photoreceptor required for image-forming vision at low light intensity. While most salt water fish species use retinal as chromophore, most freshwater fish use 3-dehydroretinal, or a mixture of retinal and 3-dehydroretinal. Light-induced isomerization of 11-cis to all-trans retinal triggers a conformational change that activates signaling via G-proteins. Subsequent receptor phosphorylation mediates displacement of the bound G-protein alpha subunit by arrestin and terminates signaling. The polypeptide is Rhodopsin (rho) (Sargocentron spiniferum (Sabre squirrelfish)).